A 121-amino-acid chain; its full sequence is Large ribosomal subunit protein uL18 (121 aa).

The protein belongs to the universal ribosomal protein uL18 family. Part of the 50S ribosomal subunit; part of the 5S rRNA/L5/L18/L25 subcomplex. Contacts the 5S and 23S rRNAs.

In terms of biological role, this is one of the proteins that bind and probably mediate the attachment of the 5S RNA into the large ribosomal subunit, where it forms part of the central protuberance. This chain is Large ribosomal subunit protein uL18, found in Mesomycoplasma hyopneumoniae (strain 232) (Mycoplasma hyopneumoniae).